Here is a 388-residue protein sequence, read N- to C-terminus: Nitric oxide reductase FlRd-NAD(+) reductase (388 aa).

This sequence belongs to the FAD-dependent oxidoreductase family. FAD is required as a cofactor.

It is found in the cytoplasm. It carries out the reaction 2 reduced [nitric oxide reductase rubredoxin domain] + NAD(+) + H(+) = 2 oxidized [nitric oxide reductase rubredoxin domain] + NADH. Its pathway is nitrogen metabolism; nitric oxide reduction. Functionally, one of at least two accessory proteins for anaerobic nitric oxide (NO) reductase. Reduces the rubredoxin moiety of NO reductase. The sequence is that of Nitric oxide reductase FlRd-NAD(+) reductase from Aeromonas hydrophila subsp. hydrophila (strain ATCC 7966 / DSM 30187 / BCRC 13018 / CCUG 14551 / JCM 1027 / KCTC 2358 / NCIMB 9240 / NCTC 8049).